A 130-amino-acid chain; its full sequence is Cholecystokinin (130 aa).

Residues 1–20 form the signal peptide; sequence MYGGICICVLLAALSVSSLG. A propeptide spanning residues 21 to 48 is cleaved from the precursor; that stretch reads QQPAGSHDGSPVAAELQQSLTEPHRHSR. A disordered region spans residues 21 to 63; sequence QQPAGSHDGSPVAAELQQSLTEPHRHSRAPSSAGPLKPAPRLD. The residue at position 112 (tyrosine 112) is a Sulfotyrosine. A Phenylalanine amide modification is found at phenylalanine 118. The propeptide occupies 122-130; the sequence is SAEEYEYSS. 2 positions are modified to sulfotyrosine: tyrosine 126 and tyrosine 128.

It belongs to the gastrin/cholecystokinin family. The precursor is cleaved by proteases to produce a number of active cholecystokinins. In terms of tissue distribution, in the small intestine, the major production site is around the vitelline diverticulum.

It is found in the secreted. Its function is as follows. This peptide hormone induces gall bladder contraction and the release of pancreatic enzymes in the gut. Its function in the brain is not clear. It also decreases food intake and regulates gastrointestinal physiological processes. This is Cholecystokinin (CCK) from Gallus gallus (Chicken).